A 257-amino-acid chain; its full sequence is uncharacterized protein (257 aa).

A signal peptide spans M1 to A22. A lipid anchor (N-palmitoyl cysteine) is attached at C23. C23 is lipidated: S-diacylglycerol cysteine.

Belongs to the staphylococcal tandem lipoprotein family.

Its subcellular location is the cell membrane. This is an uncharacterized protein from Staphylococcus aureus (strain MRSA252).